Here is a 405-residue protein sequence, read N- to C-terminus: Probable tRNA sulfurtransferase (405 aa).

One can recognise a THUMP domain in the interval 60–165 (DQVMARLSQV…REAIYLSTKT (106 aa)). Residues 183–184 (ML), 208–209 (HF), R265, G287, and Q296 each bind ATP.

The protein belongs to the ThiI family.

Its subcellular location is the cytoplasm. The catalysed reaction is [ThiI sulfur-carrier protein]-S-sulfanyl-L-cysteine + a uridine in tRNA + 2 reduced [2Fe-2S]-[ferredoxin] + ATP + H(+) = [ThiI sulfur-carrier protein]-L-cysteine + a 4-thiouridine in tRNA + 2 oxidized [2Fe-2S]-[ferredoxin] + AMP + diphosphate. It carries out the reaction [ThiS sulfur-carrier protein]-C-terminal Gly-Gly-AMP + S-sulfanyl-L-cysteinyl-[cysteine desulfurase] + AH2 = [ThiS sulfur-carrier protein]-C-terminal-Gly-aminoethanethioate + L-cysteinyl-[cysteine desulfurase] + A + AMP + 2 H(+). Its pathway is cofactor biosynthesis; thiamine diphosphate biosynthesis. Catalyzes the ATP-dependent transfer of a sulfur to tRNA to produce 4-thiouridine in position 8 of tRNAs, which functions as a near-UV photosensor. Also catalyzes the transfer of sulfur to the sulfur carrier protein ThiS, forming ThiS-thiocarboxylate. This is a step in the synthesis of thiazole, in the thiamine biosynthesis pathway. The sulfur is donated as persulfide by IscS. In Lacticaseibacillus paracasei (strain ATCC 334 / BCRC 17002 / CCUG 31169 / CIP 107868 / KCTC 3260 / NRRL B-441) (Lactobacillus paracasei), this protein is Probable tRNA sulfurtransferase.